The primary structure comprises 632 residues: Armadillo repeat-containing X-linked protein 2 (632 aa).

Over 1 to 6 the chain is Mitochondrial intermembrane; that stretch reads MSRVRD. A mitochondrion outer membrane (MOM)-targeting sequence region spans residues 1 to 6; it reads MSRVRD. Residues 7–25 form a helical; Signal-anchor membrane-spanning segment; that stretch reads AGCVAAGIVIGAGAWYCVY. The interval 26-40 is mitochondrion outer membrane (MOM)-targeting sequence; the sequence is KYTRGRDQTKKRMAK. Residues 26 to 632 lie on the Cytoplasmic side of the membrane; it reads KYTRGRDQTK…VKVIKLVNKF (607 aa). Disordered stretches follow at residues 68–124, 160–304, and 335–369; these read GFSP…AGVG, APKV…KVEV, and VPDSEEGESGWTDTESDSDSEPETQRRGRGRRPVA. Low complexity-rich tracts occupy residues 86–120 and 211–241; these read EASALDTVGAEAVAPAASSAEAQSGAGSQAQEADG and VASPTEAAEAPVPATPTGAAAPTGAAESPGT. Acidic residues predominate over residues 336–356; the sequence is PDSEEGESGWTDTESDSDSEP. 3 ARM repeats span residues 376 to 416, 418 to 457, and 498 to 537; these read PYEI…NNAN, SCNQETIRKLGGLPIIANMINKTDPHIKEKALMAMNNLSE, and ITNDYQHLLVNSIANFFRLLSQGGGKIKVEILKILSNFAE.

It belongs to the eutherian X-chromosome-specific Armcx family. Expressed at high levels ovary, heart, testis, prostate, brain, spleen and colon. Expressed at very low levels in liver and thymus. Not expressed in peripheral blood leukocytes. Not expressed in pancreas and ovarian carcinomas.

The protein localises to the mitochondrion. The protein resides in the mitochondrion outer membrane. May regulate the dynamics and distribution of mitochondria in neural cells. This chain is Armadillo repeat-containing X-linked protein 2 (ARMCX2), found in Homo sapiens (Human).